We begin with the raw amino-acid sequence, 353 residues long: N-terminal EF-hand calcium-binding protein 3 (353 aa).

An EF-hand domain is found at 27–62; sequence AGHALFQDVFRRADKNDDGKLSFEEFQNYFADGVLS. Ca(2+)-binding residues include D40, N42, D44, K46, and E51. The required for interaction with APBA3 stretch occupies residues 172–181; sequence IKAQSRPCGS. The segment covering 193–203 has biased composition (low complexity); that stretch reads SWSPSWSPGSS. Residues 193–213 are disordered; sequence SWSPSWSPGSSDTGRSSEAEQ. The span at 204 to 213 shows a compositional bias: polar residues; the sequence is DTGRSSEAEQ. Residues 253–342 form the ABM domain; the sequence is LVAQRQVQVA…QAPDTLTTVF (90 aa).

In terms of assembly, interacts with the N-terminal domain of APBA2. Interacts with NEK2. Interacts with APBA3; APBA3 seems to mediate the interaction between NECAB3 and HIF1AN. Post-translationally, phosphorylated by NEK2. As to expression, widely expressed, with highest levels in the brain.

The protein resides in the golgi apparatus. In terms of biological role, inhibits the interaction of APBA2 with amyloid-beta precursor protein (APP), and hence allows formation of amyloid-beta. May enhance the activity of HIF1A and thus promote glycolysis under normoxic conditions; the function requires its ABM domain and may implicate the stabilization of the interaction between HIF1AN and APBA3. The polypeptide is N-terminal EF-hand calcium-binding protein 3 (Necab3) (Mus musculus (Mouse)).